We begin with the raw amino-acid sequence, 440 residues long: Acyltransferase Pun1 (440 aa).

Catalysis depends on proton acceptor residues His-169 and Asp-384.

This sequence belongs to the plant acyltransferase family.

The enzyme catalyses vanillylamine + (6E)-8-methylnon-6-enoyl-CoA = capsaicin + CoA + H(+). The catalysed reaction is (6E)-8-methylnon-6-enoyl-CoA + 4-hydroxy-3-methoxy-benzenemethanol = capsiate + CoA. In terms of biological role, involved in the biosynthesis of capsaicinoids and capsinoids natural products, pungent alkaloids synthesized from phenylpropanoid intermediates in the placental tissue of chili pepper fruit acting as repellant on herbivorous mammals and conferring spiciness to hot peppers. Catalyzes the biosynthesis of capsaicin, a pungent component, and of capsiate, a non-pungent component, from vanillylamine and vanillyl alcohol, respectively. Can transfer an acyl from 8-methylnon-6-enoyl-CoA to vanillylamine forming capsaicin and CoA. The chain is Acyltransferase Pun1 from Capsicum frutescens (Cayenne pepper).